Reading from the N-terminus, the 290-residue chain is Fructose-1,6-bisphosphatase class 1 (290 aa).

Residues glutamate 78, aspartate 96, leucine 98, and aspartate 99 each contribute to the Mg(2+) site. Substrate contacts are provided by residues 99-102 (DGSS), tyrosine 201, and lysine 226. A Mg(2+)-binding site is contributed by glutamate 232.

The protein belongs to the FBPase class 1 family. As to quaternary structure, homotetramer. Requires Mg(2+) as cofactor.

Its subcellular location is the cytoplasm. The catalysed reaction is beta-D-fructose 1,6-bisphosphate + H2O = beta-D-fructose 6-phosphate + phosphate. Its pathway is carbohydrate biosynthesis; gluconeogenesis. The chain is Fructose-1,6-bisphosphatase class 1 from Helicobacter acinonychis (strain Sheeba).